Consider the following 294-residue polypeptide: Nucleotide-binding protein Smal_0950 (294 aa).

16–23 (GLSGSGKS) is an ATP binding site. 69-72 (DVRG) contacts GTP.

It belongs to the RapZ-like family.

Functionally, displays ATPase and GTPase activities. This Stenotrophomonas maltophilia (strain R551-3) protein is Nucleotide-binding protein Smal_0950.